Here is a 375-residue protein sequence, read N- to C-terminus: E3 ubiquitin-protein ligase IE2 (375 aa).

The span at 1-12 (MSRINNADTPTN) shows a compositional bias: polar residues. 2 disordered regions span residues 1–61 (MSRI…VGDR) and 115–142 (LTTT…DYNS). An RING-type zinc finger spans residues 177–225 (CHICSCTFTDIKNYNSNFVTSSECNHAVCFKCYVSIVFNKEAYKCSICN). Positions 272-348 (KTIIEELQLE…TFLQNQLDAQ (77 aa)) form a coiled coil.

Belongs to the alphabaculovirus IE2 protein family. Homooligomer. Post-translationally, auto-ubiquitinated.

The protein localises to the host nucleus. The enzyme catalyses S-ubiquitinyl-[E2 ubiquitin-conjugating enzyme]-L-cysteine + [acceptor protein]-L-lysine = [E2 ubiquitin-conjugating enzyme]-L-cysteine + N(6)-ubiquitinyl-[acceptor protein]-L-lysine.. RING-finger E3 ubiquitin ligase that plays an important regulatory role during the initial stages of infection. Migrates to specific nuclear foci early in infection supposely to prepare the sites for viral replication by targeting and ubiquitinating host proteins. In Hyphantria cunea nuclear polyhedrosis virus (HcNPV), this protein is E3 ubiquitin-protein ligase IE2 (IE2).